A 350-amino-acid chain; its full sequence is Heat-inducible transcription repressor HrcA (350 aa).

Belongs to the HrcA family.

Negative regulator of class I heat shock genes (grpE-dnaK-dnaJ and groELS operons). Prevents heat-shock induction of these operons. This Methylococcus capsulatus (strain ATCC 33009 / NCIMB 11132 / Bath) protein is Heat-inducible transcription repressor HrcA.